Here is a 276-residue protein sequence, read N- to C-terminus: uncharacterized protein (276 aa).

The region spanning 20–137 (PVLIFIPGAN…PPINTFLPDS (118 aa)) is the AB hydrolase-1 domain. Residues 57–76 (GESELTEPLPDSASNPDSDY) are disordered.

It belongs to the AB hydrolase superfamily.

This is an uncharacterized protein from Staphylococcus aureus (strain MW2).